A 429-amino-acid polypeptide reads, in one-letter code: Serine--tRNA ligase (429 aa).

Thr-235–Glu-237 contributes to the L-serine binding site. Arg-266–Glu-268 is a binding site for ATP. Glu-289 contacts L-serine. Glu-353 to Ser-356 serves as a coordination point for ATP. Ser-389 contacts L-serine.

It belongs to the class-II aminoacyl-tRNA synthetase family. Type-1 seryl-tRNA synthetase subfamily. In terms of assembly, homodimer. The tRNA molecule binds across the dimer.

It localises to the cytoplasm. It catalyses the reaction tRNA(Ser) + L-serine + ATP = L-seryl-tRNA(Ser) + AMP + diphosphate + H(+). The catalysed reaction is tRNA(Sec) + L-serine + ATP = L-seryl-tRNA(Sec) + AMP + diphosphate + H(+). It functions in the pathway aminoacyl-tRNA biosynthesis; selenocysteinyl-tRNA(Sec) biosynthesis; L-seryl-tRNA(Sec) from L-serine and tRNA(Sec): step 1/1. In terms of biological role, catalyzes the attachment of serine to tRNA(Ser). Is also able to aminoacylate tRNA(Sec) with serine, to form the misacylated tRNA L-seryl-tRNA(Sec), which will be further converted into selenocysteinyl-tRNA(Sec). The sequence is that of Serine--tRNA ligase from Haemophilus influenzae (strain PittGG).